The following is a 451-amino-acid chain: Threonylcarbamoyladenosine tRNA methylthiotransferase MtaB (451 aa).

Positions 2–114 (ATVAFHTLGC…MLGYIDQYRE (113 aa)) constitute an MTTase N-terminal domain. 6 residues coordinate [4Fe-4S] cluster: C11, C47, C78, C153, C157, and C160. Residues 139 to 369 (FTDRTRASLK…IALSDQLAKE (231 aa)) form the Radical SAM core domain. Positions 372–437 (SQYENEVLEI…YPYNEGQFVR (66 aa)) constitute a TRAM domain.

This sequence belongs to the methylthiotransferase family. MtaB subfamily. [4Fe-4S] cluster is required as a cofactor.

It localises to the cytoplasm. It carries out the reaction N(6)-L-threonylcarbamoyladenosine(37) in tRNA + (sulfur carrier)-SH + AH2 + 2 S-adenosyl-L-methionine = 2-methylsulfanyl-N(6)-L-threonylcarbamoyladenosine(37) in tRNA + (sulfur carrier)-H + 5'-deoxyadenosine + L-methionine + A + S-adenosyl-L-homocysteine + 2 H(+). Catalyzes the methylthiolation of N6-threonylcarbamoyladenosine (t(6)A), leading to the formation of 2-methylthio-N6-threonylcarbamoyladenosine (ms(2)t(6)A) at position 37 in tRNAs that read codons beginning with adenine. This Bacillus subtilis (strain 168) protein is Threonylcarbamoyladenosine tRNA methylthiotransferase MtaB (mtaB).